The following is a 266-amino-acid chain: Large ribosomal subunit protein eL8 (266 aa).

Residues 1 to 11 (MPKGKKAKGKK) are compositionally biased toward basic residues. Disordered regions lie at residues 1–28 (MPKG…KKVV) and 105–134 (ETKQ…KRPP). A compositionally biased stretch (basic and acidic residues) spans 116–130 (ARAEQKAAGKGDAPT).

This sequence belongs to the eukaryotic ribosomal protein eL8 family. Component of the large ribosomal subunit.

Its subcellular location is the cytoplasm. Component of the large ribosomal subunit. The ribosome is a large ribonucleoprotein complex responsible for the synthesis of proteins in the cell. The protein is Large ribosomal subunit protein eL8 (rpl7a) of Takifugu rubripes (Japanese pufferfish).